A 689-amino-acid chain; its full sequence is DNA ligase (689 aa).

NAD(+) contacts are provided by residues 40-44 (DSEYD), 89-90 (SL), and E121. Catalysis depends on K123, which acts as the N6-AMP-lysine intermediate. Positions 144, 179, 295, and 319 each coordinate NAD(+). Residues C413, C416, C431, and C437 each coordinate Zn(2+). One can recognise a BRCT domain in the interval 610–689 (REQSGLTDKI…EEWLTLIKNV (80 aa)).

This sequence belongs to the NAD-dependent DNA ligase family. LigA subfamily. It depends on Mg(2+) as a cofactor. Requires Mn(2+) as cofactor.

The catalysed reaction is NAD(+) + (deoxyribonucleotide)n-3'-hydroxyl + 5'-phospho-(deoxyribonucleotide)m = (deoxyribonucleotide)n+m + AMP + beta-nicotinamide D-nucleotide.. Functionally, DNA ligase that catalyzes the formation of phosphodiester linkages between 5'-phosphoryl and 3'-hydroxyl groups in double-stranded DNA using NAD as a coenzyme and as the energy source for the reaction. It is essential for DNA replication and repair of damaged DNA. The chain is DNA ligase from Rickettsia conorii (strain ATCC VR-613 / Malish 7).